Here is a 392-residue protein sequence, read N- to C-terminus: 1-deoxy-D-xylulose 5-phosphate reductoisomerase (392 aa).

Thr-14, Gly-15, Ser-16, Ile-17, Gly-40, Gln-43, and Asn-126 together coordinate NADPH. Lys-127 contributes to the 1-deoxy-D-xylulose 5-phosphate binding site. NADPH is bound at residue Glu-128. Asp-150 is a Mn(2+) binding site. Residues Ser-151, Glu-152, Ser-176, and His-199 each coordinate 1-deoxy-D-xylulose 5-phosphate. Position 152 (Glu-152) interacts with Mn(2+). Residue Gly-205 coordinates NADPH. Ser-212, Asn-217, Lys-218, and Glu-221 together coordinate 1-deoxy-D-xylulose 5-phosphate. Glu-221 lines the Mn(2+) pocket.

It belongs to the DXR family. Mg(2+) serves as cofactor. The cofactor is Mn(2+).

It catalyses the reaction 2-C-methyl-D-erythritol 4-phosphate + NADP(+) = 1-deoxy-D-xylulose 5-phosphate + NADPH + H(+). The protein operates within isoprenoid biosynthesis; isopentenyl diphosphate biosynthesis via DXP pathway; isopentenyl diphosphate from 1-deoxy-D-xylulose 5-phosphate: step 1/6. In terms of biological role, catalyzes the NADPH-dependent rearrangement and reduction of 1-deoxy-D-xylulose-5-phosphate (DXP) to 2-C-methyl-D-erythritol 4-phosphate (MEP). In Corynebacterium glutamicum (strain ATCC 13032 / DSM 20300 / JCM 1318 / BCRC 11384 / CCUG 27702 / LMG 3730 / NBRC 12168 / NCIMB 10025 / NRRL B-2784 / 534), this protein is 1-deoxy-D-xylulose 5-phosphate reductoisomerase.